The sequence spans 136 residues: MANLTKLKIVTPYAQILEKDVYSVELKTSEGRITVLPDHNPLMSTIENHVAYIRELPNTPRKPLLLLDGIVYIEQHQVRVFSDYFKFLDEIQIDEINSSLNQLKHDLNNEEDDKKKLQLKSKIKLNESILIAYKDR.

It belongs to the ATPase epsilon chain family. In terms of assembly, F-type ATPases have 2 components, CF(1) - the catalytic core - and CF(0) - the membrane proton channel. CF(1) has five subunits: alpha(3), beta(3), gamma(1), delta(1), epsilon(1). CF(0) has three main subunits: a, b and c.

It localises to the cell membrane. In terms of biological role, produces ATP from ADP in the presence of a proton gradient across the membrane. The protein is ATP synthase epsilon chain of Ureaplasma parvum serovar 3 (strain ATCC 27815 / 27 / NCTC 11736).